Reading from the N-terminus, the 616-residue chain is Spastin (616 aa).

The disordered stretch occupies residues 1-44; the sequence is MNSPGGRGKKKGSGGPSSPVPPRPPPPCLASSRPAPRPAPPPQS. Residues 1–50 are required for nuclear localization; the sequence is MNSPGGRGKKKGSGGPSSPVPPRPPPPCLASSRPAPRPAPPPQSPHKRNL. Topologically, residues 1 to 56 are cytoplasmic; the sequence is MNSPGGRGKKKGSGGPSSPVPPRPPPPCLASSRPAPRPAPPPQSPHKRNLYYFSYP. A required for interaction with ATL1 region spans residues 1 to 80; it reads MNSPGGRGKK…LGLLFVWLCQ (80 aa). Residues 1–194 form a required for midbody localization region; that stretch reads MNSPGGRGKK…LVMAKDRLQL (194 aa). The required for interaction with RTN1 stretch occupies residues 1–300; it reads MNSPGGRGKK…STPKTNRTNK (300 aa). Residues 4 to 11 carry the Nuclear localization signal motif; sequence PGGRGKKK. 2 stretches are compositionally biased toward pro residues: residues 18–28 and 35–44; these read SPVPPRPPPPC and APRPAPPPQS. Positions 50 to 87 are required for interaction with SSNA1 and microtubules; that stretch reads LYYFSYPLFLGFALLRLVAFHLGLLFVWLCQRFSRALM. An intramembrane region (helical) is located at residues 57-77; it reads LFLGFALLRLVAFHLGLLFVW. Residues 59–67 carry the Nuclear export signal motif; it reads LGFALLRLV. The Cytoplasmic segment spans residues 78–616; it reads LCQRFSRALM…WNKDFGDTTV (539 aa). A sufficient for interaction with CHMP1B region spans residues 112 to 196; the sequence is EVERVRAFHK…MAKDRLQLLE (85 aa). The tract at residues 114–200 is required for interaction with microtubules; that stretch reads ERVRAFHKQA…RLQLLEKLQP (87 aa). Residues 120–195 form the MIT domain; that stretch reads HKQAFEYISV…VMAKDRLQLL (76 aa). A disordered region spans residues 223 to 266; sequence GHLQSESGAVPKRKDPLTHPSNSLPRSKAIMKTGSTGLSGHHRA. The interval 226–328 is sufficient for interaction with microtubules; it reads QSESGAVPKR…NVDSNLANFI (103 aa). Residues 228 to 616 are sufficient for microtubule severing; sequence ESGAVPKRKD…WNKDFGDTTV (389 aa). Ser-245 and Ser-268 each carry phosphoserine. Residues 270 to 328 are required for interaction with microtubules and microtubule severing; sequence SGLSIVSGMRQGPGPTTATHKSTPKTNRTNKPSTPTTAPRKKKDLKNFRNVDSNLANFI. Positions 278 to 311 are disordered; sequence MRQGPGPTTATHKSTPKTNRTNKPSTPTTAPRKK. The span at 283-306 shows a compositional bias: polar residues; the sequence is GPTTATHKSTPKTNRTNKPSTPTT. At Thr-306 the chain carries Phosphothreonine. The Nuclear localization signal signature appears at 309 to 312; it reads RKKK. Residues 310 to 312 are required for interaction with microtubules; that stretch reads KKK. 382–389 provides a ligand contact to ATP; that stretch reads GPPGNGKT. Ser-597 bears the Phosphoserine mark.

It belongs to the AAA ATPase family. Spastin subfamily. In terms of assembly, homohexamer. Mostly monomeric, but assembles into hexameric structure for short periods of time. Oligomerization seems to be a prerequisite for catalytic activity. Binding to ATP in a cleft between two adjacent subunits stabilizes the homohexameric form. Binds to microtubules at least in part via the alpha-tubulin and beta-tubulin tails. The hexamer adopts a ring conformation through which microtubules pass prior to being severed. Does not interact strongly with tubulin heterodimers. Interacts (via MIT domain) with CHMP1B; the interaction is direct. Interacts with SSNA1. Interacts with ATL1. Interacts with RTN1. Interacts with ZFYVE27. Interacts with REEP1. Interacts (via MIT domain) with IST1.

The protein resides in the membrane. It is found in the endoplasmic reticulum. It localises to the midbody. Its subcellular location is the cytoplasm. The protein localises to the cytoskeleton. The protein resides in the microtubule organizing center. It is found in the centrosome. It localises to the perinuclear region. Its subcellular location is the nucleus. The protein localises to the spindle. The protein resides in the cell projection. It is found in the axon. It carries out the reaction n ATP + n H2O + a microtubule = n ADP + n phosphate + (n+1) alpha/beta tubulin heterodimers.. With respect to regulation, allosteric enzyme with a cooperative mechanism; at least two neighbor subunits influence each other strongly in spastin hexamers. Microtubule binding promotes cooperative interactions among spastin subunits. Its function is as follows. ATP-dependent microtubule severing protein that specifically recognizes and cuts microtubules that are polyglutamylated. Preferentially recognizes and acts on microtubules decorated with short polyglutamate tails: severing activity increases as the number of glutamates per tubulin rises from one to eight, but decreases beyond this glutamylation threshold. Severing activity is not dependent on tubulin acetylation or detyrosination. Microtubule severing promotes reorganization of cellular microtubule arrays and the release of microtubules from the centrosome following nucleation. It is critical for the biogenesis and maintenance of complex microtubule arrays in axons, spindles and cilia. SPAST is involved in abscission step of cytokinesis and nuclear envelope reassembly during anaphase in cooperation with the ESCRT-III complex. Recruited at the midbody, probably by IST1, and participates in membrane fission during abscission together with the ESCRT-III complex. Recruited to the nuclear membrane by IST1 and mediates microtubule severing, promoting nuclear envelope sealing and mitotic spindle disassembly during late anaphase. Required for membrane traffic from the endoplasmic reticulum (ER) to the Golgi and endosome recycling. Recruited by IST1 to endosomes and regulates early endosomal tubulation and recycling by mediating microtubule severing. Probably plays a role in axon growth and the formation of axonal branches. The polypeptide is Spastin (Sus scrofa (Pig)).